Reading from the N-terminus, the 640-residue chain is Chaperone protein DnaK (640 aa).

The residue at position 198 (Thr198) is a Phosphothreonine; by autocatalysis. The interval 600-640 is disordered; that stretch reads KTQGAGAEGSEQPHGEQEAGGAAKGETVVDADFEEVKDDKK. The span at 628 to 640 shows a compositional bias: acidic residues; it reads VDADFEEVKDDKK.

Belongs to the heat shock protein 70 family.

Functionally, acts as a chaperone. In Geobacter sp. (strain M21), this protein is Chaperone protein DnaK.